The following is a 492-amino-acid chain: Trehalose-phosphatase (492 aa).

Positions 1–55 (MTETVTDQGKQRSSKLQKNEAAKDEQVEGKGKETLESGTDKSAEQNSSLLVGQPD) are disordered. Positions 17–43 (QKNEAAKDEQVEGKGKETLESGTDKSA) are enriched in basic and acidic residues. Residues Asp213 and Asp215 each contribute to the Mg(2+) site. Asp215 serves as the catalytic Proton donor/acceptor. Substrate is bound at residue 332-334 (QRK). A Mg(2+)-binding site is contributed by Asp424.

It belongs to the gob-1 trehalose phosphatase family. The cofactor is Mg(2+).

The catalysed reaction is alpha,alpha-trehalose 6-phosphate + H2O = alpha,alpha-trehalose + phosphate. Its activity is regulated as follows. Inhibited by trehalose 6-sulfate. Functionally, catalyzes the hydrolysis of trehalose 6-phosphate to trehalose and phosphate; prevents the accumulation of toxic levels of trehalose 6-phosphate. This is Trehalose-phosphatase from Brugia malayi (Filarial nematode worm).